The primary structure comprises 518 residues: Glycerophosphoinositol transporter 1 (518 aa).

Residues 1–44 are Cytoplasmic-facing; the sequence is MEDKDITSVNEKEVNENTNPRIIKYDAERRATRTETSKKDKWKN. The helical transmembrane segment at 45 to 65 threads the bilayer; it reads IVTIIASGFALISDGYVNGSM. Residues 66-91 lie on the Extracellular side of the membrane; the sequence is SMLNKVFVMEYGKKNYSSKVSTRVSN. Asparagine 80 carries N-linked (GlcNAc...) asparagine glycosylation. A helical transmembrane segment spans residues 92–112; that stretch reads AALVGIIFGQFFMGIAADYYS. At 113 to 114 the chain is on the cytoplasmic side; sequence RK. Residues 115–136 form a helical membrane-spanning segment; the sequence is SCILVATAILVIGSALCAASHG. Residues 137-138 lie on the Extracellular side of the membrane; that stretch reads TT. A helical transmembrane segment spans residues 139–159; the sequence is VPGMFWMLTVMRGLVGIGVGA. Topologically, residues 160–184 are cytoplasmic; the sequence is EYPTSTLSANESANEYTTTKRGGIL. A helical transmembrane segment spans residues 185-205; it reads VMVTNLPLAFGGPFATIIFLI. Residues 206 to 216 are Extracellular-facing; the sequence is VYKICSGTKHL. Residues 217–237 traverse the membrane as a helical segment; that stretch reads EAIWRTVFAIGCFWPLSVFYF. Over 238-268 the chain is Cytoplasmic; the sequence is RWKTATTEVYEKGRIKRNIPYFLALKFYWKR. The helical transmembrane segment at 269-289 threads the bilayer; it reads LLGTCGTWFMYDFVTFPNGIF. Topologically, residues 290-306 are extracellular; it reads SSTIISSVIKDQNDLVK. The helical transmembrane segment at 307 to 327 threads the bilayer; that stretch reads VAEWNLLLGVLAVLGVPIGAY. At 328–335 the chain is on the cytoplasmic side; that stretch reads LSDRIGRK. A helical transmembrane segment spans residues 336-356; that stretch reads YTLMFGFSGYIIFGLIIGCAY. The Extracellular segment spans residues 357–360; it reads DQLK. Residues 361 to 381 traverse the membrane as a helical segment; it reads KITPLFIIFYAFMNMLGNAGP. Topologically, residues 382 to 399 are cytoplasmic; that stretch reads GDMLGVISSEASATAVRG. A helical membrane pass occupies residues 400-420; the sequence is VFYGLSAVTGKIGSVVGVECF. Residues 421–430 lie on the Extracellular side of the membrane; that stretch reads QPIRDNLGAR. The chain crosses the membrane as a helical span at residues 431 to 451; the sequence is WTFIIAAICGLIGIIITYFFV. The Cytoplasmic portion of the chain corresponds to 452–518; the sequence is PHSLESDLMK…IISVRQVDQS (67 aa).

Belongs to the major facilitator superfamily. Sugar transporter (TC 2.A.1.1) family.

The protein resides in the cell membrane. The catalysed reaction is sn-glycerol 3-phosphocholine(out) = sn-glycerol 3-phosphocholine(in). It catalyses the reaction sn-glycero-3-phospho-1D-myo-inositol(out) = sn-glycero-3-phospho-1D-myo-inositol(in). Its function is as follows. Glycerophosphodiester transporter that mediates uptake of both glycerophosphoinositol (GroPIns) and glycerophosphocholine (GroPCho) as sources of the nutrients inositol and phosphate. In Saccharomyces cerevisiae (strain ATCC 204508 / S288c) (Baker's yeast), this protein is Glycerophosphoinositol transporter 1.